Here is a 1070-residue protein sequence, read N- to C-terminus: Alpha-glucosidase (1070 aa).

The signal sequence occupies residues 1 to 35 (MRSIKAASLTPLLAALFTTLSSTLALPSSVWEHQL). Residues Asn-48, Asn-99, Asn-144, Asn-161, Asn-208, Asn-384, Asn-458, Asn-480, and Asn-513 are each glycosylated (N-linked (GlcNAc...) asparagine). The Nucleophile role is filled by Asp-526. The active site involves Glu-529. 5 N-linked (GlcNAc...) asparagine glycosylation sites follow: Asn-544, Asn-566, Asn-574, Asn-578, and Asn-635. Asp-730 functions as the Proton donor in the catalytic mechanism. N-linked (GlcNAc...) asparagine glycosylation is found at Asn-818, Asn-885, Asn-916, Asn-983, Asn-992, Asn-996, Asn-1008, Asn-1029, Asn-1043, and Asn-1052.

It belongs to the glycosyl hydrolase 31 family.

It catalyses the reaction Hydrolysis of terminal, non-reducing (1-&gt;4)-linked alpha-D-glucose residues with release of alpha-D-glucose.. Its function is as follows. Hydrolyzes a broad range of alpha-D-linked glucopyranosides, including maltose (alpha-1,4), sucrose (alpha-1,2), isomaltose (alpha-1,6) and turanose (alpha-1,3). The protein is Alpha-glucosidase of Candida tsukubaensis (Yeast).